A 345-amino-acid polypeptide reads, in one-letter code: 3-dehydroquinate synthase (345 aa).

Residues 86 to 90 (GALLD), 110 to 111 (TT), K123, and K132 contribute to the NAD(+) site. 3 residues coordinate Zn(2+): E165, H229, and H243.

This sequence belongs to the sugar phosphate cyclases superfamily. Dehydroquinate synthase family. Requires NAD(+) as cofactor. Co(2+) is required as a cofactor. It depends on Zn(2+) as a cofactor.

The protein resides in the cytoplasm. It catalyses the reaction 7-phospho-2-dehydro-3-deoxy-D-arabino-heptonate = 3-dehydroquinate + phosphate. Its pathway is metabolic intermediate biosynthesis; chorismate biosynthesis; chorismate from D-erythrose 4-phosphate and phosphoenolpyruvate: step 2/7. Catalyzes the conversion of 3-deoxy-D-arabino-heptulosonate 7-phosphate (DAHP) to dehydroquinate (DHQ). The chain is 3-dehydroquinate synthase from Pyrobaculum aerophilum (strain ATCC 51768 / DSM 7523 / JCM 9630 / CIP 104966 / NBRC 100827 / IM2).